The primary structure comprises 131 residues: Large ribosomal subunit protein bL12 (131 aa).

The protein belongs to the bacterial ribosomal protein bL12 family. In terms of assembly, homodimer. Part of the ribosomal stalk of the 50S ribosomal subunit. Forms a multimeric L10(L12)X complex, where L10 forms an elongated spine to which 2 to 4 L12 dimers bind in a sequential fashion. Binds GTP-bound translation factors.

Its function is as follows. Forms part of the ribosomal stalk which helps the ribosome interact with GTP-bound translation factors. Is thus essential for accurate translation. In Parasynechococcus marenigrum (strain WH8102), this protein is Large ribosomal subunit protein bL12.